The following is a 350-amino-acid chain: Biotin synthase (350 aa).

One can recognise a Radical SAM core domain in the interval 38–256; the sequence is NYVQVSTLLS…IAVARIMMPE (219 aa). [4Fe-4S] cluster contacts are provided by Cys53, Cys57, and Cys60. [2Fe-2S] cluster-binding residues include Cys97, Cys128, Cys188, and Arg260.

Belongs to the radical SAM superfamily. Biotin synthase family. Homodimer. It depends on [4Fe-4S] cluster as a cofactor. [2Fe-2S] cluster serves as cofactor.

The catalysed reaction is (4R,5S)-dethiobiotin + (sulfur carrier)-SH + 2 reduced [2Fe-2S]-[ferredoxin] + 2 S-adenosyl-L-methionine = (sulfur carrier)-H + biotin + 2 5'-deoxyadenosine + 2 L-methionine + 2 oxidized [2Fe-2S]-[ferredoxin]. The protein operates within cofactor biosynthesis; biotin biosynthesis; biotin from 7,8-diaminononanoate: step 2/2. Functionally, catalyzes the conversion of dethiobiotin (DTB) to biotin by the insertion of a sulfur atom into dethiobiotin via a radical-based mechanism. This Aliivibrio salmonicida (strain LFI1238) (Vibrio salmonicida (strain LFI1238)) protein is Biotin synthase.